The sequence spans 788 residues: Endonuclease MutS2 (788 aa).

332–339 is an ATP binding site; it reads GPNTGGKT. The region spanning 713–788 is the Smr domain; that stretch reads IDLRGLDSEE…GTGVTVVELK (76 aa).

The protein belongs to the DNA mismatch repair MutS family. MutS2 subfamily. As to quaternary structure, homodimer. Binds to stalled ribosomes, contacting rRNA.

Functionally, endonuclease that is involved in the suppression of homologous recombination and thus may have a key role in the control of bacterial genetic diversity. Acts as a ribosome collision sensor, splitting the ribosome into its 2 subunits. Detects stalled/collided 70S ribosomes which it binds and splits by an ATP-hydrolysis driven conformational change. Acts upstream of the ribosome quality control system (RQC), a ribosome-associated complex that mediates the extraction of incompletely synthesized nascent chains from stalled ribosomes and their subsequent degradation. Probably generates substrates for RQC. This chain is Endonuclease MutS2, found in Clostridium acetobutylicum (strain ATCC 824 / DSM 792 / JCM 1419 / IAM 19013 / LMG 5710 / NBRC 13948 / NRRL B-527 / VKM B-1787 / 2291 / W).